Reading from the N-terminus, the 86-residue chain is Large ribosomal subunit protein uL23 (86 aa).

It belongs to the universal ribosomal protein uL23 family. As to quaternary structure, part of the 50S ribosomal subunit. Contacts protein L29.

Functionally, binds to 23S rRNA. One of the proteins that surrounds the polypeptide exit tunnel on the outside of the ribosome. This is Large ribosomal subunit protein uL23 from Thermococcus sibiricus (strain DSM 12597 / MM 739).